The chain runs to 314 residues: Methionyl-tRNA formyltransferase (314 aa).

110–113 contacts (6S)-5,6,7,8-tetrahydrofolate; sequence SLLP.

This sequence belongs to the Fmt family.

It carries out the reaction L-methionyl-tRNA(fMet) + (6R)-10-formyltetrahydrofolate = N-formyl-L-methionyl-tRNA(fMet) + (6S)-5,6,7,8-tetrahydrofolate + H(+). Attaches a formyl group to the free amino group of methionyl-tRNA(fMet). The formyl group appears to play a dual role in the initiator identity of N-formylmethionyl-tRNA by promoting its recognition by IF2 and preventing the misappropriation of this tRNA by the elongation apparatus. This Bacillus cytotoxicus (strain DSM 22905 / CIP 110041 / 391-98 / NVH 391-98) protein is Methionyl-tRNA formyltransferase.